The chain runs to 243 residues: Pyridoxine 5'-phosphate synthase (243 aa).

Residue Asn-9 coordinates 3-amino-2-oxopropyl phosphate. 11 to 12 lines the 1-deoxy-D-xylulose 5-phosphate pocket; that stretch reads DH. Arg-20 provides a ligand contact to 3-amino-2-oxopropyl phosphate. His-45 serves as the catalytic Proton acceptor. 1-deoxy-D-xylulose 5-phosphate contacts are provided by Arg-47 and His-52. Catalysis depends on Glu-72, which acts as the Proton acceptor. Thr-102 lines the 1-deoxy-D-xylulose 5-phosphate pocket. His-193 serves as the catalytic Proton donor. 3-amino-2-oxopropyl phosphate is bound by residues Gly-194 and 215-216; that span reads GH.

It belongs to the PNP synthase family. Homooctamer; tetramer of dimers.

It localises to the cytoplasm. It carries out the reaction 3-amino-2-oxopropyl phosphate + 1-deoxy-D-xylulose 5-phosphate = pyridoxine 5'-phosphate + phosphate + 2 H2O + H(+). It functions in the pathway cofactor biosynthesis; pyridoxine 5'-phosphate biosynthesis; pyridoxine 5'-phosphate from D-erythrose 4-phosphate: step 5/5. Functionally, catalyzes the complicated ring closure reaction between the two acyclic compounds 1-deoxy-D-xylulose-5-phosphate (DXP) and 3-amino-2-oxopropyl phosphate (1-amino-acetone-3-phosphate or AAP) to form pyridoxine 5'-phosphate (PNP) and inorganic phosphate. The sequence is that of Pyridoxine 5'-phosphate synthase from Escherichia coli O6:H1 (strain CFT073 / ATCC 700928 / UPEC).